Consider the following 437-residue polypeptide: Ribulose bisphosphate carboxylase/oxygenase activase, chloroplastic (437 aa).

Positions 1 to 10 (MATAVSTIGS) are enriched in polar residues. The disordered stretch occupies residues 1–26 (MATAVSTIGSVNRAPPNLNGSSSSAS). An ATP-binding site is contributed by 165–172 (GGKGQGKS).

This sequence belongs to the RuBisCO activase family.

It is found in the plastid. The protein resides in the chloroplast stroma. Functionally, activation of RuBisCO (ribulose-1,5-bisphosphate carboxylase/oxygenase; EC 4.1.1.39) involves the ATP-dependent carboxylation of the epsilon-amino group of lysine leading to a carbamate structure. In Malus domestica (Apple), this protein is Ribulose bisphosphate carboxylase/oxygenase activase, chloroplastic (RCA).